A 262-amino-acid chain; its full sequence is MSAPHLLIDAGNSRIKWALADAQRTLVASGAFGHTRDGGADPDWSALPHPQGAWISNVAGADVAARLDALLDAQWPALPRTTIRARAAQCGVTNGYTSPEQLGSDRWAGLIGARAAFPDEHLLIATFGTATTLEALRADGRFTGGLIAPGWALMMRALGTHTAQLPTLSTDIASGLLADARAEPFQIDTPRSLSAGCLYAQAGLIERACRDLAAAWQAPVRLVLAGGAADDVARALTLPHTRHDGLILSGLALIAAEGAARD.

Residue 9–16 coordinates ATP; it reads DAGNSRIK. Substrate contacts are provided by residues Tyr96 and 103–106; that span reads GSDR. Asp105 (proton acceptor) is an active-site residue. Thr129 lines the ATP pocket. Thr189 contributes to the substrate binding site.

This sequence belongs to the type III pantothenate kinase family. Homodimer. NH4(+) serves as cofactor. The cofactor is K(+).

Its subcellular location is the cytoplasm. The catalysed reaction is (R)-pantothenate + ATP = (R)-4'-phosphopantothenate + ADP + H(+). It functions in the pathway cofactor biosynthesis; coenzyme A biosynthesis; CoA from (R)-pantothenate: step 1/5. Its function is as follows. Catalyzes the phosphorylation of pantothenate (Pan), the first step in CoA biosynthesis. This is Type III pantothenate kinase from Burkholderia vietnamiensis (strain G4 / LMG 22486) (Burkholderia cepacia (strain R1808)).